Here is a 335-residue protein sequence, read N- to C-terminus: Holliday junction branch migration complex subunit RuvB (335 aa).

A large ATPase domain (RuvB-L) region spans residues 1–181 (MDRIVEIEKY…FGMQFRLEFY (181 aa)). ATP contacts are provided by residues Leu-20, Arg-21, Gly-62, Lys-65, Thr-66, Thr-67, 128-130 (EDY), Arg-171, Tyr-181, and Arg-218. Residue Thr-66 participates in Mg(2+) binding. The interval 182–252 (KDSELALILQ…RANEALNSLG (71 aa)) is small ATPAse domain (RuvB-S). Residues 255-335 (ELGFDAMDLR…LNYEKTLFEE (81 aa)) are head domain (RuvB-H). Arg-309 and Arg-314 together coordinate DNA.

Belongs to the RuvB family. As to quaternary structure, homohexamer. Forms an RuvA(8)-RuvB(12)-Holliday junction (HJ) complex. HJ DNA is sandwiched between 2 RuvA tetramers; dsDNA enters through RuvA and exits via RuvB. An RuvB hexamer assembles on each DNA strand where it exits the tetramer. Each RuvB hexamer is contacted by two RuvA subunits (via domain III) on 2 adjacent RuvB subunits; this complex drives branch migration. In the full resolvosome a probable DNA-RuvA(4)-RuvB(12)-RuvC(2) complex forms which resolves the HJ.

The protein localises to the cytoplasm. The enzyme catalyses ATP + H2O = ADP + phosphate + H(+). Functionally, the RuvA-RuvB-RuvC complex processes Holliday junction (HJ) DNA during genetic recombination and DNA repair, while the RuvA-RuvB complex plays an important role in the rescue of blocked DNA replication forks via replication fork reversal (RFR). RuvA specifically binds to HJ cruciform DNA, conferring on it an open structure. The RuvB hexamer acts as an ATP-dependent pump, pulling dsDNA into and through the RuvAB complex. RuvB forms 2 homohexamers on either side of HJ DNA bound by 1 or 2 RuvA tetramers; 4 subunits per hexamer contact DNA at a time. Coordinated motions by a converter formed by DNA-disengaged RuvB subunits stimulates ATP hydrolysis and nucleotide exchange. Immobilization of the converter enables RuvB to convert the ATP-contained energy into a lever motion, pulling 2 nucleotides of DNA out of the RuvA tetramer per ATP hydrolyzed, thus driving DNA branch migration. The RuvB motors rotate together with the DNA substrate, which together with the progressing nucleotide cycle form the mechanistic basis for DNA recombination by continuous HJ branch migration. Branch migration allows RuvC to scan DNA until it finds its consensus sequence, where it cleaves and resolves cruciform DNA. The polypeptide is Holliday junction branch migration complex subunit RuvB (Campylobacter jejuni subsp. doylei (strain ATCC BAA-1458 / RM4099 / 269.97)).